A 92-amino-acid chain; its full sequence is Small ribosomal subunit protein uS19c (92 aa).

The protein belongs to the universal ribosomal protein uS19 family.

It is found in the plastid. It localises to the chloroplast. Its function is as follows. Protein S19 forms a complex with S13 that binds strongly to the 16S ribosomal RNA. The chain is Small ribosomal subunit protein uS19c from Cucumis sativus (Cucumber).